A 391-amino-acid chain; its full sequence is DNA repair protein NreB (391 aa).

The segment at 3 to 17 (CIECRGRMLCSRKVC) adopts a C4-type zinc-finger fold. Positions 384-391 (QRTLWEFM) match the PIP motif motif.

This sequence belongs to the Nre family. In terms of assembly, interacts with the DNA polymerase sliding clamp (PCNA) via the PIP (PCNA-interacting peptide) motif.

Functionally, involved in DNA damage repair. This Archaeoglobus fulgidus (strain ATCC 49558 / DSM 4304 / JCM 9628 / NBRC 100126 / VC-16) protein is DNA repair protein NreB.